Consider the following 332-residue polypeptide: UPF0194 membrane protein YbhG (332 aa).

The signal sequence occupies residues 1–16 (MMKKPVVIGLAVVVLA). The stretch at 108 to 211 (EEIAQAAAAV…LQDSTLVAPS (104 aa)) forms a coiled coil.

This sequence belongs to the UPF0194 family.

Its subcellular location is the periplasm. The protein is UPF0194 membrane protein YbhG of Escherichia coli O6:H1 (strain CFT073 / ATCC 700928 / UPEC).